Consider the following 461-residue polypeptide: Protein IQ-DOMAIN 2 (461 aa).

Positions 1–55 are disordered; sequence MGKKAKWFSSVKKAFSPDSKKSKQKLAEGQNGVISNPPVVDNVRQSSSSPPPALA. The IQ domain occupies 114-142; it reads EEAAAILIQTIFRGYLARRALRAMRGLVR. The segment at 141-158 is calmodulin-binding; that stretch reads VRLKLLMEGSVVKRQAAN. The tract at residues 278-461 is disordered; the sequence is PLESSEKEQS…GVTVTNGAGS (184 aa). The segment covering 310-345 has biased composition (polar residues); it reads LTRNGSTQPNTPSSARGTPRNKNSFFSPPTPSRLNQ. Positions 425 to 432 match the Nuclear localization signal motif; the sequence is KKRLSYPT.

This sequence belongs to the IQD family. In terms of assembly, binds to multiple calmodulin (CaM) in the presence of Ca(2+) and CaM-like proteins.

The protein resides in the nucleus. Its subcellular location is the cytoplasm. It localises to the cytoskeleton. In terms of biological role, may be involved in cooperative interactions with calmodulins or calmodulin-like proteins. Recruits calmodulin proteins to microtubules, thus being a potential scaffold in cellular signaling and trafficking. May associate with nucleic acids and regulate gene expression at the transcriptional or post-transcriptional level. This is Protein IQ-DOMAIN 2 from Arabidopsis thaliana (Mouse-ear cress).